The sequence spans 986 residues: Ephrin type-B receptor 2 (986 aa).

The first 18 residues, 1-18 (MAVRRLGAALLLLPLLAA), serve as a signal peptide directing secretion. Residues 19–543 (VEETLMDSTT…QTSIKEKLPL (525 aa)) are Extracellular-facing. Residues 20–202 (EETLMDSTTA…FYRKCPRIIQ (183 aa)) form the Eph LBD domain. Intrachain disulfides connect cysteine 62–cysteine 184 and cysteine 97–cysteine 107. N-linked (GlcNAc...) asparagine glycans are attached at residues asparagine 265, asparagine 336, asparagine 428, and asparagine 482. Fibronectin type-III domains lie at 324–434 (IPSA…TNQA) and 435–530 (APSA…TMTE). A helical transmembrane segment spans residues 544 to 564 (IVGSSAAGLVFLIAVVVIAIV). The Cytoplasmic segment spans residues 565-986 (CNRRGFERAD…QMNQIQSVEV (422 aa)). Residues 621 to 884 (VKIEQVIGAG…QIVNTLDKMI (264 aa)) form the Protein kinase domain. ATP contacts are provided by residues 627 to 635 (IGAGEFGEV) and lysine 653. The active-site Proton acceptor is aspartate 746. A Glycyl lysine isopeptide (Lys-Gly) (interchain with G-Cter in ubiquitin) cross-link involves residue lysine 891. In terms of domain architecture, SAM spans 913–977 (TSFNTVDEWL…LNSIQVMRAQ (65 aa)). The PDZ-binding motif lies at 984–986 (VEV).

This sequence belongs to the protein kinase superfamily. Tyr protein kinase family. Ephrin receptor subfamily. As to quaternary structure, heterotetramer upon binding of the ligand. The heterotetramer is composed of an ephrin dimer and a receptor dimer. Interacts (via PDZ-binding motif) with GRIP1 and PICK1 (via PDZ domain). Interacts with ARHGEF15; mediates ARHGEF15 phosphorylation, ubiquitination and degradation by the proteasome. Interacts with AQP1; involved in endolymph production in the inner ear. Interacts with EFNA5. Interacts with SPSB1. Interacts with SPSB4. Interacts with SH2D3C. Post-translationally, autophosphorylated; ligand binding stimulates autophosphorylation on tyrosine residues. Ligand binding induces cleavage by matrix metalloproteinases (MMPs) such as MMP7/MMP9, producing an EphB2/N-terminal fragment (NTF) and a C-terminal long fragment (EphB2-LF). EphB2-LF is further cleaved by MMPs, producing EphB2/CTF1 which is further cleaved by the PS1/gamma-secretase producing EphB2/CTF2. In terms of processing, polyubiquitinated; ligand binding stimulates ubiquitination. Ubiquitinated by RNF186 at Lys-891, mainly through 'Lys-27'-linked polyubiquitin chains. Ubiquitinated by CRL2(KLHDC2) E3 ligase complex. Expressed in the epithelial dark cells of the inner ear. Expressed in the region of the proximal tubules of the kidney nephron. Expressed in myogenic progenitor cells.

The protein localises to the cell membrane. The protein resides in the cell projection. It is found in the axon. Its subcellular location is the dendrite. It carries out the reaction L-tyrosyl-[protein] + ATP = O-phospho-L-tyrosyl-[protein] + ADP + H(+). Functionally, receptor tyrosine kinase which binds promiscuously transmembrane ephrin-B family ligands residing on adjacent cells, leading to contact-dependent bidirectional signaling into neighboring cells. The signaling pathway downstream of the receptor is referred to as forward signaling while the signaling pathway downstream of the ephrin ligand is referred to as reverse signaling. Functions in axon guidance during development. Involved in the guidance of commissural axons, that form a major interhemispheric connection between the 2 temporal lobes of the cerebral cortex. Also involved in guidance of contralateral inner ear efferent growth cones at the midline and of retinal ganglion cell axons to the optic disk. In addition to axon guidance, also regulates dendritic spines development and maturation and stimulates the formation of excitatory synapses. Upon activation by EFNB1, abolishes the ARHGEF15-mediated negative regulation on excitatory synapse formation. Controls other aspects of development including angiogenesis, palate development and in inner ear development through regulation of endolymph production. Forward and reverse signaling through the EFNB2/EPHB2 complex regulate movement and adhesion of cells that tubularize the urethra and septate the cloaca. May function as a tumor suppressor. May be involved in the regulation of platelet activation and blood coagulation. This chain is Ephrin type-B receptor 2, found in Mus musculus (Mouse).